Consider the following 91-residue polypeptide: Small ribosomal subunit protein uS15 (91 aa).

The protein belongs to the universal ribosomal protein uS15 family. In terms of assembly, part of the 30S ribosomal subunit. Forms a bridge to the 50S subunit in the 70S ribosome, contacting the 23S rRNA.

Functionally, one of the primary rRNA binding proteins, it binds directly to 16S rRNA where it helps nucleate assembly of the platform of the 30S subunit by binding and bridging several RNA helices of the 16S rRNA. Forms an intersubunit bridge (bridge B4) with the 23S rRNA of the 50S subunit in the ribosome. The chain is Small ribosomal subunit protein uS15 from Sulfurimonas denitrificans (strain ATCC 33889 / DSM 1251) (Thiomicrospira denitrificans (strain ATCC 33889 / DSM 1251)).